The primary structure comprises 102 residues: Large ribosomal subunit protein bL21 (102 aa).

The protein belongs to the bacterial ribosomal protein bL21 family. As to quaternary structure, part of the 50S ribosomal subunit. Contacts protein L20.

Functionally, this protein binds to 23S rRNA in the presence of protein L20. In Ehrlichia chaffeensis (strain ATCC CRL-10679 / Arkansas), this protein is Large ribosomal subunit protein bL21.